The primary structure comprises 110 residues: Phosphoribosyl-ATP pyrophosphatase (110 aa).

Belongs to the PRA-PH family.

Its subcellular location is the cytoplasm. The enzyme catalyses 1-(5-phospho-beta-D-ribosyl)-ATP + H2O = 1-(5-phospho-beta-D-ribosyl)-5'-AMP + diphosphate + H(+). It functions in the pathway amino-acid biosynthesis; L-histidine biosynthesis; L-histidine from 5-phospho-alpha-D-ribose 1-diphosphate: step 2/9. The protein is Phosphoribosyl-ATP pyrophosphatase of Pseudomonas syringae pv. syringae (strain B728a).